The primary structure comprises 607 residues: Large ribosomal subunit assembly factor BipA (607 aa).

A tr-type G domain is found at 3 to 198 (ENLRNIAIIA…AIVDHVPAPD (196 aa)). Residues 15 to 20 (DHGKTT) and 128 to 131 (NKVD) contribute to the GTP site. Residues 481–607 (GQRQNGVLIS…RRANRGQKEE (127 aa)) are C-terminal domain (CTD), required but not sufficient to bind 70S or 30S ribosomes.

This sequence belongs to the TRAFAC class translation factor GTPase superfamily. Classic translation factor GTPase family. BipA subfamily. As to quaternary structure, monomer.

Its subcellular location is the cytoplasm. It carries out the reaction GTP + H2O = GDP + phosphate + H(+). With respect to regulation, ribosome-associated GTPase is not affected by low levels of ppGpp, &gt;40 uM ppGpp and &gt;50 uM GDP inhibit GTPase. The C-terminus (residues 387-607 or 481-607) inhibits GTPase activity, in its absence kcat increases, but GTPase is no longer stimulated by 70S ribosome or 30S or 50S subunits. In terms of biological role, a 50S ribosomal subunit assembly protein with GTPase activity, required for 50S subunit assembly at low temperatures, may also play a role in translation. Binds GTP and analogs. Binds the 70S ribosome between the 30S and 50S subunits, in a similar position as ribosome-bound EF-G; it contacts a number of ribosomal proteins, both rRNAs and the A-site tRNA. A ribosome-stimulated GTPase, GTPase activity increases 4 fold in the presence of 70S ribosomes. Binds 70S ribosomes in the presence of GTP or its non-hydrolyzable analog GMPPNP; in the presence of ppGpp or under stress conditions it binds to 30S ribosomal subunits. In Salmonella typhimurium (strain LT2 / SGSC1412 / ATCC 700720), this protein is Large ribosomal subunit assembly factor BipA.